Reading from the N-terminus, the 97-residue chain is uncharacterized protein (97 aa).

Positions 1 to 16 (MKQTVLLLFTALFLSG) are cleaved as a signal peptide. Residue C17 is the site of N-palmitoyl cysteine attachment. C17 carries the S-diacylglycerol cysteine lipid modification.

The protein localises to the cell membrane. This is an uncharacterized protein from Bacillus subtilis (strain 168).